We begin with the raw amino-acid sequence, 286 residues long: Putative thiosulfate sulfurtransferase (286 aa).

One can recognise a Rhodanese 1 domain in the interval 27 to 134 (DDPAYRLVEV…WVDNDYPTTD (108 aa)). Glycyl lysine isopeptide (Lys-Gly) (interchain with G-Cter in SAMP2) cross-links involve residues Lys-162 and Lys-166. The Rhodanese 2 domain occupies 164–283 (VDKGLPLVDV…WGNLVGAPVE (120 aa)). Residue Cys-242 is the Cysteine persulfide intermediate of the active site. Arg-247 provides a ligand contact to substrate.

It carries out the reaction thiosulfate + hydrogen cyanide = thiocyanate + sulfite + 2 H(+). Its function is as follows. May be a sulfotransferase involved in the formation of thiosulfate. The sequence is that of Putative thiosulfate sulfurtransferase (tssA) from Haloferax volcanii (strain ATCC 29605 / DSM 3757 / JCM 8879 / NBRC 14742 / NCIMB 2012 / VKM B-1768 / DS2) (Halobacterium volcanii).